Reading from the N-terminus, the 311-residue chain is Methionyl-tRNA formyltransferase (311 aa).

(6S)-5,6,7,8-tetrahydrofolate is bound at residue 110–113; sequence SLLP.

This sequence belongs to the Fmt family.

The catalysed reaction is L-methionyl-tRNA(fMet) + (6R)-10-formyltetrahydrofolate = N-formyl-L-methionyl-tRNA(fMet) + (6S)-5,6,7,8-tetrahydrofolate + H(+). In terms of biological role, attaches a formyl group to the free amino group of methionyl-tRNA(fMet). The formyl group appears to play a dual role in the initiator identity of N-formylmethionyl-tRNA by promoting its recognition by IF2 and preventing the misappropriation of this tRNA by the elongation apparatus. The polypeptide is Methionyl-tRNA formyltransferase (Streptococcus equi subsp. equi (strain 4047)).